We begin with the raw amino-acid sequence, 222 residues long: PKHD-type hydroxylase PCC8801_2196 (222 aa).

One can recognise a Fe2OG dioxygenase domain in the interval 78 to 175 (RIHSLLFSRY…RLVVVGWIES (98 aa)). The Fe cation site is built by H96, D98, and H156. R166 is a 2-oxoglutarate binding site.

Fe(2+) is required as a cofactor. Requires L-ascorbate as cofactor.

This chain is PKHD-type hydroxylase PCC8801_2196, found in Rippkaea orientalis (strain PCC 8801 / RF-1) (Cyanothece sp. (strain PCC 8801)).